A 182-amino-acid polypeptide reads, in one-letter code: Glycerol-3-phosphate acyltransferase 1 (182 aa).

Transmembrane regions (helical) follow at residues 5–25 (MQFL…AYIV), 54–74 (GYFI…VAVA), 81–101 (PTFV…PVLF), 117–137 (IAFD…FYLI), and 157–177 (ILYS…VLIL).

It belongs to the PlsY family. In terms of assembly, probably interacts with PlsX.

It localises to the cell membrane. It catalyses the reaction an acyl phosphate + sn-glycerol 3-phosphate = a 1-acyl-sn-glycero-3-phosphate + phosphate. It participates in lipid metabolism; phospholipid metabolism. Its function is as follows. Catalyzes the transfer of an acyl group from acyl-phosphate (acyl-PO(4)) to glycerol-3-phosphate (G3P) to form lysophosphatidic acid (LPA). This enzyme utilizes acyl-phosphate as fatty acyl donor, but not acyl-CoA or acyl-ACP. This chain is Glycerol-3-phosphate acyltransferase 1, found in Bacillus cereus (strain ATCC 14579 / DSM 31 / CCUG 7414 / JCM 2152 / NBRC 15305 / NCIMB 9373 / NCTC 2599 / NRRL B-3711).